A 339-amino-acid chain; its full sequence is Ferredoxin--NADP reductase (339 aa).

7 residues coordinate FAD: aspartate 32, glutamine 40, tyrosine 45, valine 85, phenylalanine 120, aspartate 287, and threonine 327.

The protein belongs to the ferredoxin--NADP reductase type 2 family. As to quaternary structure, homodimer. It depends on FAD as a cofactor.

It carries out the reaction 2 reduced [2Fe-2S]-[ferredoxin] + NADP(+) + H(+) = 2 oxidized [2Fe-2S]-[ferredoxin] + NADPH. The protein is Ferredoxin--NADP reductase of Wolbachia sp. subsp. Brugia malayi (strain TRS).